Reading from the N-terminus, the 357-residue chain is MAARLALRGGPGAAGQRPWLLLAPLLLVPLLARPAEALVEGLYCGTRDCYEVLGVSRSASKAEIARAYRQLARRYHPDRYRPEPGDGPGGAPPSAEAFLLVATAYETLKDEETRKDYDYMLDHPEEYYSHYYHYYSRRLAPKVDVRVVILVSVCAISMFQYFSWWNSYNKAISYLATVPKYRIQATEIAKEQGLLKKAKEKGKNKKSKEEIRDEEENIIKNIIKSKIDIKGGYQKPQVRDLLLFQVILAPVHLCSYIAWYCRWIYNFNIKGKEYGEEERLYIIRKSMKMSQSQFDSLEDHQKEMFLKRELWIKENYEVYKQEQEEELKKKLANDPRWKRYRRWMKNEGPGRLTFVDD.

Residues 19 to 39 (WLLLAPLLLVPLLARPAEALV) traverse the membrane as a helical segment. The J domain occupies 48 to 121 (DCYEVLGVSR…ETRKDYDYML (74 aa)). 2 helical membrane-spanning segments follow: residues 147–167 (VVILVSVCAISMFQYFSWWNS) and 241–261 (LLLFQVILAPVHLCSYIAWYC).

Belongs to the DNAJC25 family.

It is found in the membrane. This chain is DnaJ homolog subfamily C member 25 (Dnajc25), found in Mus musculus (Mouse).